The primary structure comprises 159 residues: Phosphopantetheine adenylyltransferase (159 aa).

Ser-8 contributes to the substrate binding site. Residues 8-9 and His-16 each bind ATP; that span reads SF. Lys-40, Leu-72, and Arg-86 together coordinate substrate. Residues 87–89, Glu-97, and 122–128 each bind ATP; these read GLR and YSFISSS.

It belongs to the bacterial CoaD family. In terms of assembly, homohexamer. It depends on Mg(2+) as a cofactor.

The protein resides in the cytoplasm. The enzyme catalyses (R)-4'-phosphopantetheine + ATP + H(+) = 3'-dephospho-CoA + diphosphate. Its pathway is cofactor biosynthesis; coenzyme A biosynthesis; CoA from (R)-pantothenate: step 4/5. In terms of biological role, reversibly transfers an adenylyl group from ATP to 4'-phosphopantetheine, yielding dephospho-CoA (dPCoA) and pyrophosphate. This is Phosphopantetheine adenylyltransferase from Thermosipho melanesiensis (strain DSM 12029 / CIP 104789 / BI429).